The sequence spans 207 residues: Suppressor of IKBKE 1 (207 aa).

Coiled coils occupy residues T4–Q32 and D154–S193. Residues T186–Q207 are disordered. Over residues E189 to E199 the composition is skewed to basic and acidic residues.

It belongs to the SIKE family. Interacts with IKBKE and TBK1 via its coiled coil region. Interaction with TBK1 is disrupted upon viral infection or TLR3 stimulation. Interacts with CDC42BPB. Associates with the STRIPAK core complex composed of PP2A catalytic and scaffolding subunits, the striatins (PP2A regulatory subunits), the striatin-associated proteins MOB4, STRIP1 and STRIP2, PDCD10 and members of the STE20 kinases, such as STK24 and STK26.

Its function is as follows. Suppressor of IKK-epsilon. Associates with the striatin-interacting phosphatase and kinase (STRIPAK) core complex, forming the extended (SIKE1:SLMAP)STRIPAK complex. The (SIKE1:SLMAP)STRIPAK complex dephosphorylates STK3 leading to the inhibition of Hippo signaling and the control of cell growth. The polypeptide is Suppressor of IKBKE 1 (sike1) (Xenopus tropicalis (Western clawed frog)).